Consider the following 304-residue polypeptide: tRNA dimethylallyltransferase (304 aa).

2 to 9 (GPTASGKT) contributes to the ATP binding site. Position 4–9 (4–9 (TASGKT)) interacts with substrate. The interaction with substrate tRNA stretch occupies residues 28 to 31 (DSAL).

The protein belongs to the IPP transferase family. In terms of assembly, monomer. The cofactor is Mg(2+).

It catalyses the reaction adenosine(37) in tRNA + dimethylallyl diphosphate = N(6)-dimethylallyladenosine(37) in tRNA + diphosphate. Catalyzes the transfer of a dimethylallyl group onto the adenine at position 37 in tRNAs that read codons beginning with uridine, leading to the formation of N6-(dimethylallyl)adenosine (i(6)A). This is tRNA dimethylallyltransferase from Blochmanniella pennsylvanica (strain BPEN).